The chain runs to 259 residues: uncharacterized protein (259 aa).

This is an uncharacterized protein from Schizosaccharomyces pombe (strain 972 / ATCC 24843) (Fission yeast).